Reading from the N-terminus, the 78-residue chain is MSDTAERVKKIVVEHLGVDADKVTEQASFIDDLGADSLDTVELVMAFEEEFGVEIPDDAAETILTVGDAVKYIEKATA.

A Carrier domain is found at 2-77; sequence SDTAERVKKI…DAVKYIEKAT (76 aa). Serine 37 is subject to O-(pantetheine 4'-phosphoryl)serine.

It belongs to the acyl carrier protein (ACP) family. In terms of processing, 4'-phosphopantetheine is transferred from CoA to a specific serine of apo-ACP by AcpS. This modification is essential for activity because fatty acids are bound in thioester linkage to the sulfhydryl of the prosthetic group.

It localises to the cytoplasm. It participates in lipid metabolism; fatty acid biosynthesis. Functionally, carrier of the growing fatty acid chain in fatty acid biosynthesis. The protein is Acyl carrier protein of Chelativorans sp. (strain BNC1).